A 176-amino-acid polypeptide reads, in one-letter code: Adenine phosphoribosyltransferase (176 aa).

This sequence belongs to the purine/pyrimidine phosphoribosyltransferase family. As to quaternary structure, homodimer.

Its subcellular location is the cytoplasm. The catalysed reaction is AMP + diphosphate = 5-phospho-alpha-D-ribose 1-diphosphate + adenine. It functions in the pathway purine metabolism; AMP biosynthesis via salvage pathway; AMP from adenine: step 1/1. In terms of biological role, catalyzes a salvage reaction resulting in the formation of AMP, that is energically less costly than de novo synthesis. In Roseobacter denitrificans (strain ATCC 33942 / OCh 114) (Erythrobacter sp. (strain OCh 114)), this protein is Adenine phosphoribosyltransferase.